The primary structure comprises 424 residues: Enolase (424 aa).

Residue Q163 participates in (2R)-2-phosphoglycerate binding. E204 functions as the Proton donor in the catalytic mechanism. Mg(2+) contacts are provided by D241, E284, and D311. (2R)-2-phosphoglycerate is bound by residues K336, R365, S366, and K387. The active-site Proton acceptor is K336.

The protein belongs to the enolase family. The cofactor is Mg(2+).

Its subcellular location is the cytoplasm. It is found in the secreted. The protein resides in the cell surface. It catalyses the reaction (2R)-2-phosphoglycerate = phosphoenolpyruvate + H2O. It participates in carbohydrate degradation; glycolysis; pyruvate from D-glyceraldehyde 3-phosphate: step 4/5. Its function is as follows. Catalyzes the reversible conversion of 2-phosphoglycerate (2-PG) into phosphoenolpyruvate (PEP). It is essential for the degradation of carbohydrates via glycolysis. The polypeptide is Enolase (Dictyoglomus turgidum (strain DSM 6724 / Z-1310)).